The sequence spans 268 residues: Small ribosomal subunit protein eS1 (268 aa).

The tract at residues 1-21 is disordered; it reads MAVGKNKGLSKGGKKGGKKKV.

Belongs to the eukaryotic ribosomal protein eS1 family. As to quaternary structure, component of the small ribosomal subunit. Mature ribosomes consist of a small (40S) and a large (60S) subunit. The 40S subunit contains about 33 different proteins and 1 molecule of RNA (18S). The 60S subunit contains about 49 different proteins and 3 molecules of RNA (28S, 5.8S and 5S).

Its subcellular location is the cytoplasm. Essential for oogenesis; required for late follicle cell development. This Drosophila virilis (Fruit fly) protein is Small ribosomal subunit protein eS1.